Reading from the N-terminus, the 338-residue chain is Holliday junction branch migration complex subunit RuvB (338 aa).

Residues 4–184 (SDRLVSGKAR…FGISHHLQYY (181 aa)) are large ATPase domain (RuvB-L). ATP-binding positions include arginine 24, glycine 65, lysine 68, threonine 69, threonine 70, 131–133 (EDY), arginine 174, tyrosine 184, and arginine 221. Threonine 69 is a binding site for Mg(2+). The tract at residues 185–255 (HHDELTQIVM…LADEALELLA (71 aa)) is small ATPAse domain (RuvB-S). Positions 258–338 (HLGFDALDRR…NIEVPDGRNS (81 aa)) are head domain (RuvB-H). Positions 294, 313, and 318 each coordinate DNA.

This sequence belongs to the RuvB family. Homohexamer. Forms an RuvA(8)-RuvB(12)-Holliday junction (HJ) complex. HJ DNA is sandwiched between 2 RuvA tetramers; dsDNA enters through RuvA and exits via RuvB. An RuvB hexamer assembles on each DNA strand where it exits the tetramer. Each RuvB hexamer is contacted by two RuvA subunits (via domain III) on 2 adjacent RuvB subunits; this complex drives branch migration. In the full resolvosome a probable DNA-RuvA(4)-RuvB(12)-RuvC(2) complex forms which resolves the HJ.

It is found in the cytoplasm. The catalysed reaction is ATP + H2O = ADP + phosphate + H(+). In terms of biological role, the RuvA-RuvB-RuvC complex processes Holliday junction (HJ) DNA during genetic recombination and DNA repair, while the RuvA-RuvB complex plays an important role in the rescue of blocked DNA replication forks via replication fork reversal (RFR). RuvA specifically binds to HJ cruciform DNA, conferring on it an open structure. The RuvB hexamer acts as an ATP-dependent pump, pulling dsDNA into and through the RuvAB complex. RuvB forms 2 homohexamers on either side of HJ DNA bound by 1 or 2 RuvA tetramers; 4 subunits per hexamer contact DNA at a time. Coordinated motions by a converter formed by DNA-disengaged RuvB subunits stimulates ATP hydrolysis and nucleotide exchange. Immobilization of the converter enables RuvB to convert the ATP-contained energy into a lever motion, pulling 2 nucleotides of DNA out of the RuvA tetramer per ATP hydrolyzed, thus driving DNA branch migration. The RuvB motors rotate together with the DNA substrate, which together with the progressing nucleotide cycle form the mechanistic basis for DNA recombination by continuous HJ branch migration. Branch migration allows RuvC to scan DNA until it finds its consensus sequence, where it cleaves and resolves cruciform DNA. In Dichelobacter nodosus (strain VCS1703A), this protein is Holliday junction branch migration complex subunit RuvB.